A 294-amino-acid polypeptide reads, in one-letter code: Probable endonuclease 4 (294 aa).

Residues His71, His111, Glu148, Asp182, His185, His217, Asp230, His232, and Glu262 each contribute to the Zn(2+) site.

This sequence belongs to the AP endonuclease 2 family. Zn(2+) serves as cofactor.

The enzyme catalyses Endonucleolytic cleavage to 5'-phosphooligonucleotide end-products.. In terms of biological role, endonuclease IV plays a role in DNA repair. It cleaves phosphodiester bonds at apurinic or apyrimidinic (AP) sites, generating a 3'-hydroxyl group and a 5'-terminal sugar phosphate. The protein is Probable endonuclease 4 of Acholeplasma laidlawii (strain PG-8A).